The chain runs to 400 residues: Elongation factor Tu (400 aa).

Residues 10–209 (KPHVNIGTIG…VVDKYIPTPQ (200 aa)) enclose the tr-type G domain. Residues 19-26 (GHVDHGKT) form a G1 region. 19–26 (GHVDHGKT) is a GTP binding site. Residue Thr26 coordinates Mg(2+). The tract at residues 60–64 (GITIN) is G2. Positions 81-84 (DCPG) are G3. GTP contacts are provided by residues 81-85 (DCPGH) and 136-139 (NKVD). Positions 136 to 139 (NKVD) are G4. Positions 174-176 (SAL) are G5.

This sequence belongs to the TRAFAC class translation factor GTPase superfamily. Classic translation factor GTPase family. EF-Tu/EF-1A subfamily. As to quaternary structure, monomer.

Its subcellular location is the cytoplasm. The catalysed reaction is GTP + H2O = GDP + phosphate + H(+). Its function is as follows. GTP hydrolase that promotes the GTP-dependent binding of aminoacyl-tRNA to the A-site of ribosomes during protein biosynthesis. The sequence is that of Elongation factor Tu from Caldicellulosiruptor saccharolyticus (strain ATCC 43494 / DSM 8903 / Tp8T 6331).